Consider the following 462-residue polypeptide: Glutamate--tRNA ligase (462 aa).

The 'HIGH' region signature appears at 11–21 (PSPTGFIHLGN). Residues 243 to 247 (KMSKR) carry the 'KMSKS' region motif. ATP is bound at residue lysine 246.

It belongs to the class-I aminoacyl-tRNA synthetase family. Glutamate--tRNA ligase type 1 subfamily. Monomer.

Its subcellular location is the cytoplasm. It carries out the reaction tRNA(Glu) + L-glutamate + ATP = L-glutamyl-tRNA(Glu) + AMP + diphosphate. Catalyzes the attachment of glutamate to tRNA(Glu) in a two-step reaction: glutamate is first activated by ATP to form Glu-AMP and then transferred to the acceptor end of tRNA(Glu). In Albidiferax ferrireducens (strain ATCC BAA-621 / DSM 15236 / T118) (Rhodoferax ferrireducens), this protein is Glutamate--tRNA ligase.